Reading from the N-terminus, the 849-residue chain is Putative endoplasmic reticulum mannosidase MNL2 (849 aa).

Over 1 to 12 (MSIARLVYSLFR) the chain is Cytoplasmic. Residues 13–32 (RVRSVLLLFITISLLFYYTF) traverse the membrane as a helical; Signal-anchor for type II membrane protein segment. The Lumenal segment spans residues 33–849 (QNEIDILNSY…TQGGHIIKKK (817 aa)). A glycan (N-linked (GlcNAc...) asparagine) is linked at Asn45. Residues 56 to 79 (HNTEGSSKLDPPDLSSTGSDRIAT) are disordered. A disulfide bond links Cys559 and Cys598.

The protein belongs to the glycosyl hydrolase 47 family. Requires Ca(2+) as cofactor.

The protein localises to the endoplasmic reticulum membrane. It participates in protein modification; protein glycosylation. In terms of biological role, putative mannosidase involved in glycoprotein quality control since it is involved in the targeting of misfolded glycoproteins for ER-associated protein degradation (ERAD). This chain is Putative endoplasmic reticulum mannosidase MNL2 (MNL2), found in Saccharomyces cerevisiae (strain ATCC 204508 / S288c) (Baker's yeast).